Consider the following 494-residue polypeptide: Probable cytosol aminopeptidase (494 aa).

Positions 260 and 265 each coordinate Mn(2+). Lysine 272 is an active-site residue. Residues aspartate 283, aspartate 342, and glutamate 344 each coordinate Mn(2+). The active site involves arginine 346.

The protein belongs to the peptidase M17 family. It depends on Mn(2+) as a cofactor.

It localises to the cytoplasm. The enzyme catalyses Release of an N-terminal amino acid, Xaa-|-Yaa-, in which Xaa is preferably Leu, but may be other amino acids including Pro although not Arg or Lys, and Yaa may be Pro. Amino acid amides and methyl esters are also readily hydrolyzed, but rates on arylamides are exceedingly low.. It carries out the reaction Release of an N-terminal amino acid, preferentially leucine, but not glutamic or aspartic acids.. Presumably involved in the processing and regular turnover of intracellular proteins. Catalyzes the removal of unsubstituted N-terminal amino acids from various peptides. The chain is Probable cytosol aminopeptidase from Bacillus mycoides (strain KBAB4) (Bacillus weihenstephanensis).